We begin with the raw amino-acid sequence, 610 residues long: MSDQFDAKAFLKTVTSQPGVYRMYDAGGTVIYVGKAKDLKKRLSSYFRSNLASRKTEALVAQIQQIDVTVTHTETEALLLEHNYIKLYQPRYNVLLRDDKSYPFIFLSGDTHPRLAMHRGAKHAKGEYFGPFPNGYAVRETLALLQKIFPIRQCENSVYRNRSRPCLQYQIGRCLGPCVAGLVSEEEYAQQVEYVRLFLSGKDDQVLTQLIARMEKASQNLEFEEAARIRDQIQAVRRVTEKQFVSNTGDDLDVIGVAFDAGMACVHVLFIRQGKVLGSRSYFPKVPGGTELGEVVETFVGQFYLQGSQMRTLPGEILLDFNLSDKTLLADSLTELAGRRINVQTKPRGDRARYLKLARTNAATALTSKLSQQSTVHQRLSALATVLKLPEVKRMECFDISHTMGEQTVASCVVFDANGPLRSEYRRYNITGITPGDDYAAMNQVLRRRYGKAIEESKIPDVILIDGGKGQLAQAKAVFAELDVPWDKNRPLLLGVAKGADRKAGLETLFFEPEGEGFSLPSDSPALHVIQHIRDESHDHAIGGHRKKRAKVKNTSTLETIEGVGPKRRQMLLKYMGGLQGLRNASVEEIAKVPGISQGLAEKIFWSLKH.

Residues 16–94 (SQPGVYRMYD…IKLYQPRYNV (79 aa)) enclose the GIY-YIG domain. Residues 204–239 (DQVLTQLIARMEKASQNLEFEEAARIRDQIQAVRRV) form the UVR domain.

It belongs to the UvrC family. In terms of assembly, interacts with UvrB in an incision complex.

The protein localises to the cytoplasm. In terms of biological role, the UvrABC repair system catalyzes the recognition and processing of DNA lesions. UvrC both incises the 5' and 3' sides of the lesion. The N-terminal half is responsible for the 3' incision and the C-terminal half is responsible for the 5' incision. The protein is UvrABC system protein C of Escherichia fergusonii (strain ATCC 35469 / DSM 13698 / CCUG 18766 / IAM 14443 / JCM 21226 / LMG 7866 / NBRC 102419 / NCTC 12128 / CDC 0568-73).